A 716-amino-acid chain; its full sequence is 1,4-alpha-glucan branching enzyme GlgB (716 aa).

Aspartate 399 serves as the catalytic Nucleophile. Glutamate 452 serves as the catalytic Proton donor.

Belongs to the glycosyl hydrolase 13 family. GlgB subfamily. As to quaternary structure, monomer.

The catalysed reaction is Transfers a segment of a (1-&gt;4)-alpha-D-glucan chain to a primary hydroxy group in a similar glucan chain.. Its pathway is glycan biosynthesis; glycogen biosynthesis. Functionally, catalyzes the formation of the alpha-1,6-glucosidic linkages in glycogen by scission of a 1,4-alpha-linked oligosaccharide from growing alpha-1,4-glucan chains and the subsequent attachment of the oligosaccharide to the alpha-1,6 position. The protein is 1,4-alpha-glucan branching enzyme GlgB of Rhodopseudomonas palustris (strain BisB5).